Here is a 342-residue protein sequence, read N- to C-terminus: NADH-quinone oxidoreductase subunit H (342 aa).

8 helical membrane passes run 15-35, 86-106, 119-139, 159-179, 190-210, 251-271, 277-297, and 316-336; these read LLII…LMVA, VLFI…WAVV, VGVL…IIAG, VSYE…VGSL, HVWF…SGLA, FMIC…PFDI, VPGP…FFWV, and VFLP…ELAG.

Belongs to the complex I subunit 1 family. NDH-1 is composed of 14 different subunits. Subunits NuoA, H, J, K, L, M, N constitute the membrane sector of the complex.

It is found in the cell inner membrane. It catalyses the reaction a quinone + NADH + 5 H(+)(in) = a quinol + NAD(+) + 4 H(+)(out). NDH-1 shuttles electrons from NADH, via FMN and iron-sulfur (Fe-S) centers, to quinones in the respiratory chain. The immediate electron acceptor for the enzyme in this species is believed to be ubiquinone. Couples the redox reaction to proton translocation (for every two electrons transferred, four hydrogen ions are translocated across the cytoplasmic membrane), and thus conserves the redox energy in a proton gradient. This subunit may bind ubiquinone. This Granulibacter bethesdensis (strain ATCC BAA-1260 / CGDNIH1) protein is NADH-quinone oxidoreductase subunit H.